We begin with the raw amino-acid sequence, 329 residues long: DNA-directed RNA polymerase subunit alpha (329 aa).

The segment at 1 to 235 (MQGSVTEFLK…EQLEAFVDLR (235 aa)) is alpha N-terminal domain (alpha-NTD). Residues 249-329 (FDPILLRPVD…NWPPASIADE (81 aa)) form an alpha C-terminal domain (alpha-CTD) region.

It belongs to the RNA polymerase alpha chain family. In terms of assembly, homodimer. The RNAP catalytic core consists of 2 alpha, 1 beta, 1 beta' and 1 omega subunit. When a sigma factor is associated with the core the holoenzyme is formed, which can initiate transcription.

It carries out the reaction RNA(n) + a ribonucleoside 5'-triphosphate = RNA(n+1) + diphosphate. Its function is as follows. DNA-dependent RNA polymerase catalyzes the transcription of DNA into RNA using the four ribonucleoside triphosphates as substrates. The polypeptide is DNA-directed RNA polymerase subunit alpha (Yersinia pestis bv. Antiqua (strain Antiqua)).